The sequence spans 761 residues: Elongation factor G, mitochondrial (761 aa).

Residues 1-42 constitute a mitochondrion transit peptide; the sequence is MSVQKMMWVPRKMVGGRIPFFTCSKVFSGFSRRSFHESPLAR. The 282-residue stretch at 68 to 349 folds into the tr-type G domain; that stretch reads NKLRNIGISA…AIVDYLPNPS (282 aa). Residues 77 to 84, 148 to 152, and 202 to 205 contribute to the GTP site; these read AHIDSGKT, DTPGH, and NKMD.

Belongs to the TRAFAC class translation factor GTPase superfamily. Classic translation factor GTPase family. EF-G/EF-2 subfamily. The precursor is processed in two steps involving mitochondrial intermediate peptidase (MIP) and mitochondrial processing peptidase (MPP).

It is found in the mitochondrion. It functions in the pathway protein biosynthesis; polypeptide chain elongation. Its function is as follows. Mitochondrial GTPase that catalyzes the GTP-dependent ribosomal translocation step during translation elongation. During this step, the ribosome changes from the pre-translocational (PRE) to the post-translocational (POST) state as the newly formed A-site-bound peptidyl-tRNA and P-site-bound deacylated tRNA move to the P and E sites, respectively. Catalyzes the coordinated movement of the two tRNA molecules, the mRNA and conformational changes in the ribosome. The chain is Elongation factor G, mitochondrial from Saccharomyces cerevisiae (strain ATCC 204508 / S288c) (Baker's yeast).